The primary structure comprises 106 residues: ATP-dependent Clp protease adapter protein ClpS (106 aa).

This sequence belongs to the ClpS family. As to quaternary structure, binds to the N-terminal domain of the chaperone ClpA.

In terms of biological role, involved in the modulation of the specificity of the ClpAP-mediated ATP-dependent protein degradation. The sequence is that of ATP-dependent Clp protease adapter protein ClpS from Salmonella arizonae (strain ATCC BAA-731 / CDC346-86 / RSK2980).